A 162-amino-acid polypeptide reads, in one-letter code: MGLETEKADVQLFLDDDSYSHHGDVDFADPEKFADSDHDRDPHRLNSHLKVGFEDVIAEPMTTHSCDKVWICSHALFEISKYVMYKFLTVFLAIPLAFVAGILFATLSCLHIWIIMPFVKTCLMVLPSVQTIWKSVTDVIIAPLCTSVGRSFSSISLQLSHD.

Topologically, residues methionine 1–lysine 86 are cytoplasmic. Tyrosine 19 is modified (phosphotyrosine). A phosphoserine mark is found at serine 20 and serine 36. An intramembrane region (helical) is located at residues phenylalanine 87–leucine 107. The Cytoplasmic segment spans residues serine 108–aspartate 162.

The protein belongs to the caveolin family. Homodimer. Caveolin-1 and -2 colocalize and form a stable hetero-oligomeric complex.

It is found in the golgi apparatus membrane. It localises to the cell membrane. The protein resides in the membrane. Its subcellular location is the caveola. May act as a scaffolding protein within caveolar membranes. Interacts directly with G-protein alpha subunits and can functionally regulate their activity. Caveolin-2 may function as an accessory protein in conjunction with caveolin-1. The sequence is that of Caveolin-2 (CAV2) from Microcebus murinus (Gray mouse lemur).